A 206-amino-acid chain; its full sequence is dCTP deaminase, dUMP-forming (206 aa).

Residues 117 to 122, aspartate 135, 143 to 145, glutamine 163, tyrosine 177, lysine 184, and glutamine 188 contribute to the dCTP site; these read RSSFGR and TLE. Residue glutamate 145 is the Proton donor/acceptor of the active site.

The protein belongs to the dCTP deaminase family. In terms of assembly, homotrimer.

The catalysed reaction is dCTP + 2 H2O = dUMP + NH4(+) + diphosphate. It functions in the pathway pyrimidine metabolism; dUMP biosynthesis; dUMP from dCTP: step 1/1. Bifunctional enzyme that catalyzes both the deamination of dCTP to dUTP and the hydrolysis of dUTP to dUMP without releasing the toxic dUTP intermediate. This is dCTP deaminase, dUMP-forming from Methanococcus maripaludis (strain DSM 14266 / JCM 13030 / NBRC 101832 / S2 / LL).